The following is a 220-amino-acid chain: MRNCCLRQLGRIDYASALEIQEQLAASRKQGTAADHLLLLEHPHVITLGRNGHLENLLAGDDILERAGIAFFPTNRGGDVTYHGPGQLVGYPILDLRDWKRDVGAYVRALEQAIIDTLGDYGIEAGRIPKLTGVWVGERKIAAIGVHLSRWVTSHGFALNVSTDLSYFQYIVPCGLTKPVTSMAALGVRASLDEVGERFTRHFARIFDFEMLPGASLAAA.

One can recognise a BPL/LPL catalytic domain in the interval 31 to 211 (GTAADHLLLL…HFARIFDFEM (181 aa)). Residues 76 to 83 (RGGDVTYH), 143 to 145 (AIG), and 156 to 158 (GFA) contribute to the substrate site. Cys174 functions as the Acyl-thioester intermediate in the catalytic mechanism.

Belongs to the LipB family.

It localises to the cytoplasm. It catalyses the reaction octanoyl-[ACP] + L-lysyl-[protein] = N(6)-octanoyl-L-lysyl-[protein] + holo-[ACP] + H(+). The protein operates within protein modification; protein lipoylation via endogenous pathway; protein N(6)-(lipoyl)lysine from octanoyl-[acyl-carrier-protein]: step 1/2. Its function is as follows. Catalyzes the transfer of endogenously produced octanoic acid from octanoyl-acyl-carrier-protein onto the lipoyl domains of lipoate-dependent enzymes. Lipoyl-ACP can also act as a substrate although octanoyl-ACP is likely to be the physiological substrate. This chain is Octanoyltransferase, found in Solibacter usitatus (strain Ellin6076).